The sequence spans 135 residues: S-adenosylmethionine decarboxylase proenzyme (135 aa).

S63 (schiff-base intermediate with substrate; via pyruvic acid) is an active-site residue. At S63 the chain carries Pyruvic acid (Ser); by autocatalysis. Residue H68 is the Proton acceptor; for processing activity of the active site. The active-site Proton donor; for catalytic activity is the C83.

It belongs to the prokaryotic AdoMetDC family. Type 1 subfamily. In terms of assembly, heterotetramer of two alpha and two beta chains arranged as a dimer of alpha/beta heterodimers. Pyruvate serves as cofactor. Post-translationally, is synthesized initially as an inactive proenzyme. Formation of the active enzyme involves a self-maturation process in which the active site pyruvoyl group is generated from an internal serine residue via an autocatalytic post-translational modification. Two non-identical subunits are generated from the proenzyme in this reaction, and the pyruvate is formed at the N-terminus of the alpha chain, which is derived from the carboxyl end of the proenzyme. The post-translation cleavage follows an unusual pathway, termed non-hydrolytic serinolysis, in which the side chain hydroxyl group of the serine supplies its oxygen atom to form the C-terminus of the beta chain, while the remainder of the serine residue undergoes an oxidative deamination to produce ammonia and the pyruvoyl group blocking the N-terminus of the alpha chain.

The enzyme catalyses S-adenosyl-L-methionine + H(+) = S-adenosyl 3-(methylsulfanyl)propylamine + CO2. Its pathway is amine and polyamine biosynthesis; S-adenosylmethioninamine biosynthesis; S-adenosylmethioninamine from S-adenosyl-L-methionine: step 1/1. Catalyzes the decarboxylation of S-adenosylmethionine to S-adenosylmethioninamine (dcAdoMet), the propylamine donor required for the synthesis of the polyamines spermine and spermidine from the diamine putrescine. This chain is S-adenosylmethionine decarboxylase proenzyme, found in Thermodesulfovibrio yellowstonii (strain ATCC 51303 / DSM 11347 / YP87).